Here is a 78-residue protein sequence, read N- to C-terminus: U-scoloptoxin(04)-Er1e (78 aa).

The signal sequence occupies residues Met-1 to Ala-24. Residues Arg-25–Arg-28 constitute a propeptide that is removed on maturation.

It belongs to the scoloptoxin-04 family. Post-translationally, contains 2 disulfide bonds. Expressed by the venom gland.

The protein resides in the secreted. This is U-scoloptoxin(04)-Er1e from Ethmostigmus rubripes (Giant centipede).